A 243-amino-acid chain; its full sequence is Probable 2-phosphosulfolactate phosphatase (243 aa).

Belongs to the ComB family. Mg(2+) serves as cofactor.

The catalysed reaction is (2R)-O-phospho-3-sulfolactate + H2O = (2R)-3-sulfolactate + phosphate. In Prochlorococcus marinus (strain MIT 9303), this protein is Probable 2-phosphosulfolactate phosphatase.